The chain runs to 79 residues: Small ribosomal subunit protein bS18c (79 aa).

Belongs to the bacterial ribosomal protein bS18 family. In terms of assembly, part of the 30S ribosomal subunit.

The protein localises to the plastid. It localises to the chloroplast. In Physcomitrium patens (Spreading-leaved earth moss), this protein is Small ribosomal subunit protein bS18c.